The following is a 289-amino-acid chain: Complement C1q tumor necrosis factor-related protein 7 (289 aa).

The signal sequence occupies residues 1 to 16; that stretch reads MIVLLYVTSLAICASG. The interval 36-134 is disordered; that stretch reads IPGLPGPPGP…GDRGDQGDPG (99 aa). Residues 38–139 enclose the Collagen-like domain; sequence GLPGPPGPPG…QGDPGLPGVC (102 aa). Low complexity predominate over residues 48–61; the sequence is ANGSPGPHGRIGLP. Over residues 63–76 the composition is skewed to basic and acidic residues; that stretch reads RDGRDGRKGEKGEK. Positions 78-91 are enriched in low complexity; that stretch reads TAGLKGKTGPLGLA. Residues 93–102 are compositionally biased toward basic and acidic residues; sequence EKGDQGETGK. The region spanning 143–279 is the C1q domain; it reads SIVLKSAFSV…GFLLYVDTDY (137 aa).

The protein resides in the secreted. The polypeptide is Complement C1q tumor necrosis factor-related protein 7 (C1qtnf7) (Mus musculus (Mouse)).